The primary structure comprises 83 residues: Beta-toxin Ct7 (83 aa).

Residues Met1–Cys18 form the signal peptide. The LCN-type CS-alpha/beta domain maps to Lys19–Gly81. Intrachain disulfides connect Cys29/Cys80, Cys33/Cys54, Cys40/Cys61, and Cys44/Cys63. Residue Gly81 is modified to Glycine amide. A propeptide is located at residue Gly82.

This sequence belongs to the long (4 C-C) scorpion toxin superfamily. Sodium channel inhibitor family. Beta subfamily. Expressed by the venom gland.

The protein localises to the secreted. In terms of biological role, beta toxins bind voltage-independently at site-4 of sodium channels (Nav) and shift the voltage of activation toward more negative potentials thereby affecting sodium channel activation and promoting spontaneous and repetitive firing. Is possibly toxic to mice, freshwater shrimp and crickets. The polypeptide is Beta-toxin Ct7 (Centruroides tecomanus (Scorpion)).